The following is a 111-amino-acid chain: MLKHQIKITINAIKKIKKLLLKKKNFKLKLRIFITGGGCSGFQYGFELEKITKKNDISIIQSGIEIIIDPISIQYLLGGKIDYIENLEGSKFVISNPNAKRTCGCGLSFSI.

Iron-sulfur cluster is bound by residues Cys39, Cys103, and Cys105.

It belongs to the HesB/IscA family. Homodimer. It depends on iron-sulfur cluster as a cofactor.

Its function is as follows. Required for insertion of 4Fe-4S clusters for at least IspG. The protein is Iron-sulfur cluster insertion protein ErpA of Buchnera aphidicola subsp. Cinara cedri (strain Cc).